The following is a 342-amino-acid chain: Peroxisomal membrane protein import receptor PEX19 (342 aa).

Residues 1–18 are compositionally biased toward acidic residues; that stretch reads MNENEYDNFDDLDDLLDE. Disordered stretches follow at residues 1-68 and 119-141; these read MNEN…DPEL and CSSL…GFKN. The span at 41–54 shows a compositional bias: basic and acidic residues; sequence SENKEKNAESKDSD. Phosphoserine is present on Ser62. Position 304 is a phosphoserine (Ser304). The disordered stretch occupies residues 321 to 342; it reads IDGNDPNLGNLDKELTDGCKQQ. Over residues 331 to 342 the composition is skewed to basic and acidic residues; it reads LDKELTDGCKQQ. Cys339 carries the cysteine methyl ester modification. The S-farnesyl cysteine moiety is linked to residue Cys339. The propeptide at 340 to 342 is removed in mature form; it reads KQQ.

It belongs to the peroxin-19 family. In terms of assembly, interacts (farnesylated) with PEX3; farnesylation is required for this interaction. Interacts with PEX2, PEX5, PEX10, PEX11, PEX12, PEX13, PEX14, PEX17, PEX22, PEX25, PEX30 and PEX32; the interaction requires well-defined PEX19-binding sites within the peroxisomal membrane protein targeting signal (mPTS) of the PMPs and is independent on the presence of PEX3. Interacts with VPS1.

Its subcellular location is the cytoplasm. It localises to the peroxisome membrane. The protein localises to the endoplasmic reticulum membrane. Required for proper post-translational import and stabilization of peroxisomal membrane proteins (PMPs). Acts as a cytosolic import receptor for PMPs and delivers them to the docking factor PEX3 at the peroxisomal membrane for subsequent insertion into the membrane. Acts as a chaperone in stabilizing or maintaining PMPs in the lipid bilayer. Directs PEX17, a peripheral component of the peroxisomal matrix protein translocation machinery, to peroxisomes. Stabilizes VPS1, a protein required for peroxisomal fission, at the peroxisomal membrane. Also acts in conjunction with PEX3 in the formation of peroxisomes from preperoxisomal compartments at the endoplasmic reticulum during de novo peroxisome synthesis, probably via the import of additional PMPs. In Saccharomyces cerevisiae (strain ATCC 204508 / S288c) (Baker's yeast), this protein is Peroxisomal membrane protein import receptor PEX19 (PEX19).